We begin with the raw amino-acid sequence, 195 residues long: Protein lin-28 homolog A (195 aa).

The region spanning 33–106 is the CSD domain; it reads QGSGVCKWFN…GLESTQVTGP (74 aa). The segment at 98–127 is disordered; that stretch reads LESTQVTGPGGAPCIGSERRPKVKGQQKRR. The segment at 107–130 is flexible linker; sequence GGAPCIGSERRPKVKGQQKRRQRG. The span at 118–127 shows a compositional bias: basic residues; sequence PKVKGQQKRR. CCHC-type zinc fingers lie at residues 131–148 and 153–170; these read DRCYNCGGLDHHAKECKL and KKCHFCQNPNHMVAQCPE. Zn(2+)-binding residues include Cys133, Cys136, His141, Cys146, Cys155, Cys158, His163, and Cys168.

The protein belongs to the lin-28 family. In terms of assembly, monomer.

The protein localises to the cytoplasm. It localises to the rough endoplasmic reticulum. It is found in the P-body. The protein resides in the stress granule. Its subcellular location is the nucleus. The protein localises to the nucleolus. RNA-binding protein that inhibits processing of pre-let-7 miRNAs and regulates translation of mRNAs that control developmental timing, pluripotency and metabolism. Seems to recognize a common structural G-quartet (G4) feature in its miRNA and mRNA targets. 'Translational enhancer' that drives specific mRNAs to polysomes and increases the efficiency of protein synthesis. Its association with the translational machinery and target mRNAs results in an increased number of initiation events per molecule of mRNA and, indirectly, in mRNA stabilization. Suppressor of microRNA (miRNA) biogenesis, including that of let-7. Binds specific target miRNA precursors (pre-miRNAs), recognizing an 5'-GGAG-3' motif found in their terminal loop, and recruits uridylyltransferase. This results in the terminal uridylation of target pre-miRNAs. Uridylated pre-miRNAs fail to be processed by Dicer and undergo degradation. Localized to the periendoplasmic reticulum area, binds to a large number of spliced mRNAs and inhibits the translation of mRNAs destined for the ER, reducing the synthesis of transmembrane proteins, ER or Golgi lumen proteins, and secretory proteins. Binds to and enhances the translation of mRNAs for several metabolic enzymes, increasing glycolysis and oxidative phosphorylation. Which, with the let-7 repression may enhance tissue repair in adult tissue. In Xenopus laevis (African clawed frog), this protein is Protein lin-28 homolog A (lin28a).